Reading from the N-terminus, the 422-residue chain is Ubiquitin-conjugating enzyme E2 Q1 (422 aa).

At Met1 the chain carries N-acetylmethionine. Over residues 1-24 the composition is skewed to low complexity; sequence MQQPQPQGQQQPGPGQQLGVQGAA. Disordered stretches follow at residues 1–40 and 173–221; these read MQQPQPQGQQQPGPGQQLGVQGAAPGAGGGPGGGPGPGPC and QPLP…EDDG. Over residues 25–35 the composition is skewed to gly residues; sequence PGAGGGPGGGP. A compositionally biased stretch (acidic residues) spans 185–200; sequence VSSEDEDEEMPEDTED. Residues 212–221 show a composition bias toward basic and acidic residues; the sequence is AEGKKSEDDG. A UBC core domain is found at 251–415; the sequence is QATDRLMKEL…VQIHEKNGWY (165 aa). Cys351 (glycyl thioester intermediate) is an active-site residue.

This sequence belongs to the ubiquitin-conjugating enzyme family. In terms of assembly, monomer and homodimer. Only the homodimer is linked to ubiquitin through thiolester activation. Interacts (via N-terminus) with B4GALT1 (via N-terminal cytoplasmic domain); the interaction is direct. Post-translationally, autoubiquitinated in vitro in the presence of NEDD4L. As to expression, expressed in liver, brain, heart, spleen, lung, kidney, muscle, ovary, epididymis, testis and placenta. Also expressed in thymus and ES cells. Only expressed in the uterus during pregnancy. Expressed in oocytes and during subsequent embryonic development stages (4-cell stage, blastocyst, 8.5 dpc, 13.5 dpc, 16.5 dpc and 18.5 dpc).

The protein localises to the nucleus. The protein resides in the cell projection. Its subcellular location is the filopodium. It localises to the cytoplasm. It is found in the cytosol. The catalysed reaction is S-ubiquitinyl-[E1 ubiquitin-activating enzyme]-L-cysteine + [E2 ubiquitin-conjugating enzyme]-L-cysteine = [E1 ubiquitin-activating enzyme]-L-cysteine + S-ubiquitinyl-[E2 ubiquitin-conjugating enzyme]-L-cysteine.. The protein operates within protein modification; protein ubiquitination. Its function is as follows. Catalyzes the covalent attachment of ubiquitin to other proteins. Involved in female fertility and embryo implantation. May be involved in hormonal homeostasis in females. Involved in regulation of B4GALT1 cell surface expression, B4GALT1-mediated cell adhesion to laminin and embryoid body formation. The chain is Ubiquitin-conjugating enzyme E2 Q1 (Ube2q1) from Mus musculus (Mouse).